The following is a 222-amino-acid chain: Uridine diphosphate glucose pyrophosphatase NUDT14 (222 aa).

The Nudix hydrolase domain maps to 38 to 206 (KTHDSVTILM…DIPKTLGVIY (169 aa)). The Nudix box signature appears at 111–129 (PGLSLEEAACKEAWEECGY).

This sequence belongs to the Nudix hydrolase family. Homodimer. Requires Mg(2+) as cofactor.

It is found in the cytoplasm. The catalysed reaction is UDP-sugar + H2O = UMP + alpha-D-aldose 1-phosphate.. Functionally, hydrolyzes UDP-glucose to glucose 1-phosphate and UMP and ADP-ribose to ribose 5-phosphate and AMP. The physiological substrate is probably UDP-glucose. Poor activity on other substrates such as ADP-glucose, CDP-glucose, GDP-glucose and GDP-mannose. In Mus musculus (Mouse), this protein is Uridine diphosphate glucose pyrophosphatase NUDT14 (Nudt14).